The primary structure comprises 479 residues: Ribosomal RNA small subunit methyltransferase F (479 aa).

S-adenosyl-L-methionine-binding positions include 125–131, glutamate 149, aspartate 176, and aspartate 194; that span reads AAAPGSK. Cysteine 247 acts as the Nucleophile in catalysis.

Belongs to the class I-like SAM-binding methyltransferase superfamily. RsmB/NOP family.

It localises to the cytoplasm. The enzyme catalyses cytidine(1407) in 16S rRNA + S-adenosyl-L-methionine = 5-methylcytidine(1407) in 16S rRNA + S-adenosyl-L-homocysteine + H(+). Its function is as follows. Specifically methylates the cytosine at position 1407 (m5C1407) of 16S rRNA. The polypeptide is Ribosomal RNA small subunit methyltransferase F (Salmonella typhi).